We begin with the raw amino-acid sequence, 440 residues long: Virion host shutoff protein (440 aa).

Disordered stretches follow at residues 98 to 144 (NIDH…RRKT) and 265 to 312 (IDEP…AGPG). Low complexity predominate over residues 266–281 (DEPPAASEESSASDQQ).

It belongs to the herpesviridae VHS protein family.

The protein resides in the virion. Functionally, minor structural protein that acts as an endoribonuclease during lytic infection. Degrades host mRNAs in the cytoplasm by cutting them at preferred sites, including some in regions of translation initiation. This is Virion host shutoff protein (UL41) from Amazona oratrix (yellow-headed parrot).